The primary structure comprises 215 residues: 3-demethoxyubiquinol 3-hydroxylase (215 aa).

The Fe cation site is built by Glu64, Glu94, His97, Glu146, Glu178, and His181.

The protein belongs to the COQ7 family. Fe cation serves as cofactor.

The protein resides in the cell membrane. It catalyses the reaction a 5-methoxy-2-methyl-3-(all-trans-polyprenyl)benzene-1,4-diol + AH2 + O2 = a 3-demethylubiquinol + A + H2O. It functions in the pathway cofactor biosynthesis; ubiquinone biosynthesis. Its function is as follows. Catalyzes the hydroxylation of 2-nonaprenyl-3-methyl-6-methoxy-1,4-benzoquinol during ubiquinone biosynthesis. In Coxiella burnetii (strain Dugway 5J108-111), this protein is 3-demethoxyubiquinol 3-hydroxylase.